The chain runs to 382 residues: UDP-N-acetylglucosamine--N-acetylmuramyl-(pentapeptide) pyrophosphoryl-undecaprenol N-acetylglucosamine transferase (382 aa).

UDP-N-acetyl-alpha-D-glucosamine-binding positions include 11 to 13, Asn124, Arg165, Ser200, Ile254, and Gln299; that span reads TGG.

The protein belongs to the glycosyltransferase 28 family. MurG subfamily.

It is found in the cell inner membrane. It catalyses the reaction di-trans,octa-cis-undecaprenyl diphospho-N-acetyl-alpha-D-muramoyl-L-alanyl-D-glutamyl-meso-2,6-diaminopimeloyl-D-alanyl-D-alanine + UDP-N-acetyl-alpha-D-glucosamine = di-trans,octa-cis-undecaprenyl diphospho-[N-acetyl-alpha-D-glucosaminyl-(1-&gt;4)]-N-acetyl-alpha-D-muramoyl-L-alanyl-D-glutamyl-meso-2,6-diaminopimeloyl-D-alanyl-D-alanine + UDP + H(+). The protein operates within cell wall biogenesis; peptidoglycan biosynthesis. In terms of biological role, cell wall formation. Catalyzes the transfer of a GlcNAc subunit on undecaprenyl-pyrophosphoryl-MurNAc-pentapeptide (lipid intermediate I) to form undecaprenyl-pyrophosphoryl-MurNAc-(pentapeptide)GlcNAc (lipid intermediate II). The chain is UDP-N-acetylglucosamine--N-acetylmuramyl-(pentapeptide) pyrophosphoryl-undecaprenol N-acetylglucosamine transferase from Nitratidesulfovibrio vulgaris (strain DSM 19637 / Miyazaki F) (Desulfovibrio vulgaris).